The sequence spans 733 residues: Phosphoribosylformylglycinamidine synthase subunit PurL (733 aa).

Residue His44 is part of the active site. 2 residues coordinate ATP: Tyr47 and Lys86. Glu88 contacts Mg(2+). Residues 89–92 (SHNH) and Arg111 contribute to the substrate site. Residue His90 is the Proton acceptor of the active site. Asp112 lines the Mg(2+) pocket. Gln240 provides a ligand contact to substrate. Residue Asp268 coordinates Mg(2+). 312–314 (ESQ) contacts substrate. The ATP site is built by Asp496 and Gly533. Mg(2+) is bound at residue Asn534. Ser536 serves as a coordination point for substrate.

It belongs to the FGAMS family. Monomer. Part of the FGAM synthase complex composed of 1 PurL, 1 PurQ and 2 PurS subunits.

It is found in the cytoplasm. The catalysed reaction is N(2)-formyl-N(1)-(5-phospho-beta-D-ribosyl)glycinamide + L-glutamine + ATP + H2O = 2-formamido-N(1)-(5-O-phospho-beta-D-ribosyl)acetamidine + L-glutamate + ADP + phosphate + H(+). It functions in the pathway purine metabolism; IMP biosynthesis via de novo pathway; 5-amino-1-(5-phospho-D-ribosyl)imidazole from N(2)-formyl-N(1)-(5-phospho-D-ribosyl)glycinamide: step 1/2. In terms of biological role, part of the phosphoribosylformylglycinamidine synthase complex involved in the purines biosynthetic pathway. Catalyzes the ATP-dependent conversion of formylglycinamide ribonucleotide (FGAR) and glutamine to yield formylglycinamidine ribonucleotide (FGAM) and glutamate. The FGAM synthase complex is composed of three subunits. PurQ produces an ammonia molecule by converting glutamine to glutamate. PurL transfers the ammonia molecule to FGAR to form FGAM in an ATP-dependent manner. PurS interacts with PurQ and PurL and is thought to assist in the transfer of the ammonia molecule from PurQ to PurL. The polypeptide is Phosphoribosylformylglycinamidine synthase subunit PurL (Wolinella succinogenes (strain ATCC 29543 / DSM 1740 / CCUG 13145 / JCM 31913 / LMG 7466 / NCTC 11488 / FDC 602W) (Vibrio succinogenes)).